Reading from the N-terminus, the 529-residue chain is Bifunctional purine biosynthesis protein PurH (529 aa).

In terms of domain architecture, MGS-like spans methionine 1–valine 148.

Belongs to the PurH family.

The catalysed reaction is (6R)-10-formyltetrahydrofolate + 5-amino-1-(5-phospho-beta-D-ribosyl)imidazole-4-carboxamide = 5-formamido-1-(5-phospho-D-ribosyl)imidazole-4-carboxamide + (6S)-5,6,7,8-tetrahydrofolate. It catalyses the reaction IMP + H2O = 5-formamido-1-(5-phospho-D-ribosyl)imidazole-4-carboxamide. Its pathway is purine metabolism; IMP biosynthesis via de novo pathway; 5-formamido-1-(5-phospho-D-ribosyl)imidazole-4-carboxamide from 5-amino-1-(5-phospho-D-ribosyl)imidazole-4-carboxamide (10-formyl THF route): step 1/1. The protein operates within purine metabolism; IMP biosynthesis via de novo pathway; IMP from 5-formamido-1-(5-phospho-D-ribosyl)imidazole-4-carboxamide: step 1/1. The chain is Bifunctional purine biosynthesis protein PurH from Salmonella paratyphi A (strain ATCC 9150 / SARB42).